Consider the following 304-residue polypeptide: Homoserine kinase (304 aa).

Position 92-102 (92-102 (PLARGLGSSAT)) interacts with ATP.

The protein belongs to the GHMP kinase family. Homoserine kinase subfamily.

Its subcellular location is the cytoplasm. The catalysed reaction is L-homoserine + ATP = O-phospho-L-homoserine + ADP + H(+). The protein operates within amino-acid biosynthesis; L-threonine biosynthesis; L-threonine from L-aspartate: step 4/5. In terms of biological role, catalyzes the ATP-dependent phosphorylation of L-homoserine to L-homoserine phosphate. The chain is Homoserine kinase from Nostoc punctiforme (strain ATCC 29133 / PCC 73102).